The primary structure comprises 309 residues: Taste receptor type 2 member 114 (309 aa).

The Extracellular portion of the chain corresponds to 1-7 (MLGAMEG). A helical membrane pass occupies residues 8–28 (VLLSVATSEALLGIVGNTFIA). At 29-43 (LVNCMDCTRNKNLYN) the chain is on the cytoplasmic side. A helical transmembrane segment spans residues 44–64 (IGFILTGLAISRICLVWILIT). The Extracellular portion of the chain corresponds to 65 to 87 (EAYIKIFSPQLLSPINIIELISY). Residues 88–108 (LWIITSQLNVWFATSLSIFYF) traverse the membrane as a helical segment. The Cytoplasmic portion of the chain corresponds to 109-127 (LKIANFSHHIFLWLKRRIN). The chain crosses the membrane as a helical span at residues 128-148 (IVFAFLIGCLLMSWLFSFPVV). Residues 149 to 182 (VKMVKDKKMLYINSSWQIHMKKSELIINYVFTNG) are Extracellular-facing. N-linked (GlcNAc...) asparagine glycosylation occurs at Asn-161. A helical transmembrane segment spans residues 183–203 (GVFLLFIIMLIVCFLLIISLW). Topologically, residues 204 to 233 (RHSKWMQSNESGFRDLNTEVHVKTIKVLLS) are cytoplasmic. The chain crosses the membrane as a helical span at residues 234–254 (FIILFILHLIGITINVICLLV). At 255-259 (PENNL) the chain is on the extracellular side. A helical transmembrane segment spans residues 260-280 (LFVFGLTIAFLYPCCHSLILI). Topologically, residues 281–309 (LANSRLKRCFVRILQQLMCSEEGKEFRNT) are cytoplasmic.

This sequence belongs to the G-protein coupled receptor T2R family.

It is found in the membrane. In terms of biological role, putative taste receptor which may play a role in the perception of bitterness. This Rattus norvegicus (Rat) protein is Taste receptor type 2 member 114.